The sequence spans 498 residues: Resveratrol cleavage oxygenase 1 (498 aa).

Piceatannol contacts are provided by Y105 and K136. Residues Y105 and K136 each coordinate trans-resveratrol. Residues H169, H220, and H285 each contribute to the Fe cation site. Residue E355 participates in piceatannol binding. E355 is a trans-resveratrol binding site. H481 contributes to the Fe cation binding site.

It belongs to the carotenoid oxygenase family. Requires Fe(2+) as cofactor.

The enzyme catalyses trans-resveratrol + O2 = 3,5-dihydroxybenzaldehyde + 4-hydroxybenzaldehyde. The catalysed reaction is piceatannol + O2 = 3,5-dihydroxybenzaldehyde + 3,4-dihydroxybenzaldehyde. Functionally, dioxygenase that cleaves the interphenyl C-alpha-C-beta double bond of resveratrol to yield 3,5-dihydroxybenzaldehyde and 4-hydroxybenzaldehyde. Also cleaves piceatannol, a compound that differs from resveratrol only in the occurrence of an additional hydroxyl group, which leads to the production of 3,4-dihydroxybenzaldehyde and 3,5-hydroxybenzaldehyde. This is Resveratrol cleavage oxygenase 1 from Aspergillus fumigatus (strain ATCC MYA-4609 / CBS 101355 / FGSC A1100 / Af293) (Neosartorya fumigata).